Here is a 113-residue protein sequence, read N- to C-terminus: Early nodulin-12B (113 aa).

A signal peptide spans 1 to 24 (MASFSLSILVFFISALVLVPQGFA). The interval 29–113 (NPAYRPPQTK…HPPAEDNIHF (85 aa)) is disordered. A compositionally biased stretch (pro residues) spans 32–42 (YRPPQTKPPVN). A run of 2 repeats spans residues 34 to 38 (PPQTK) and 39 to 43 (PPVNK). The interval 34 to 109 (PPQTKPPVNK…PTHKHPPAED (76 aa)) is 15 X 5 AA approximate tandem repeats of P-P-[QVHRTA]-[NHKE]-[KEDT]. The 3; approximate repeat unit spans residues 44–48 (PSHKE). Basic and acidic residues-rich tracts occupy residues 45–60 (SHKE…KEPP) and 67–113 (KEPP…NIHF). Tandem repeats lie at residues 49-53 (PPVHK), 54-58 (PPHKE), and 59-63 (PPVNK). The 7; approximate repeat unit spans residues 64–68 (PRHKE). Repeat copies occupy residues 69–73 (PPVHK), 74–78 (PPHKD), 79–83 (PPVNK), and 84–88 (PPQKE). The stretch at 89–93 (SPVHK) is one 12; approximate repeat. 3 consecutive repeat copies span residues 94 to 98 (PPRKE), 99 to 103 (PPTHK), and 105 to 109 (PPAED).

Belongs to the plant proline-rich protein superfamily. ENOD12 family. As to expression, expressed only in young nodules.

It is found in the secreted. The protein localises to the cell wall. Functionally, involved in the infection process during the plant-rhizobium interaction. This chain is Early nodulin-12B (ENOD12B), found in Medicago sativa (Alfalfa).